Here is a 404-residue protein sequence, read N- to C-terminus: MTETVNAARLLREQGVTAPAGFRAAGIAAGIKASGKRDLALVFNEGPDYGAAGVFTRNKVKAAPVLWSQQVLTTGALRAVILNSGGANACTGPGGFQDAHATAEAVAAALSDWGTETGAIEVAVCSTGLIGDRLPMDKLLAGVRTIVQDMAGGLSGGDDAAQAIMTTDTVPKQVALHHPGNWTVGGMAKGAGMIAPSLATMLCVLTTDAAVDPVALDTALRRATAATFDRLDIDGACSTNDTVLLLASGASGITPAQADLDDAVLRVCDDLCAQLQADAEGVTKRVNVTVTGAASDDDAVVAARTIARDSLVKTAVFGSDPNWGRVVAAVGIAPIALDPDRMTVSFNGSAVFADGVGTPGAREVDLSGPDIDITVDLRLGDGRATVRTTDLSHGYVEENSAYSS.

Residues threonine 166, lysine 189, threonine 200, glutamate 280, asparagine 399, and serine 404 each coordinate substrate. Threonine 200 (nucleophile) is an active-site residue.

It belongs to the ArgJ family. In terms of assembly, heterotetramer of two alpha and two beta chains.

The protein localises to the cytoplasm. It carries out the reaction N(2)-acetyl-L-ornithine + L-glutamate = N-acetyl-L-glutamate + L-ornithine. The enzyme catalyses L-glutamate + acetyl-CoA = N-acetyl-L-glutamate + CoA + H(+). It functions in the pathway amino-acid biosynthesis; L-arginine biosynthesis; L-ornithine and N-acetyl-L-glutamate from L-glutamate and N(2)-acetyl-L-ornithine (cyclic): step 1/1. The protein operates within amino-acid biosynthesis; L-arginine biosynthesis; N(2)-acetyl-L-ornithine from L-glutamate: step 1/4. Catalyzes two activities which are involved in the cyclic version of arginine biosynthesis: the synthesis of N-acetylglutamate from glutamate and acetyl-CoA as the acetyl donor, and of ornithine by transacetylation between N(2)-acetylornithine and glutamate. This is Arginine biosynthesis bifunctional protein ArgJ from Mycolicibacterium paratuberculosis (strain ATCC BAA-968 / K-10) (Mycobacterium paratuberculosis).